Here is a 211-residue protein sequence, read N- to C-terminus: Rho-related GTP-binding protein RhoF (211 aa).

At Met1 the chain carries N-acetylmethionine. Residue Gly26–Thr33 participates in GTP binding. Positions Tyr48 to Tyr56 match the Effector region motif. GTP-binding positions include Asp73–Gln77 and Cys131–Asp134. At Cys208 the chain carries Cysteine methyl ester. Cys208 carries the S-geranylgeranyl cysteine lipid modification. The propeptide at Leu209–Leu211 is removed in mature form.

This sequence belongs to the small GTPase superfamily. Rho family.

It localises to the cell membrane. The protein resides in the cytoplasm. Its subcellular location is the cytoskeleton. Plasma membrane-associated small GTPase which cycles between an active GTP-bound and an inactive GDP-bound state. Causes the formation of thin, actin-rich surface projections called filopodia. Functions cooperatively with CDC42 and Rac to generate additional structures, increasing the diversity of actin-based morphology. The protein is Rho-related GTP-binding protein RhoF (Rhof) of Mus musculus (Mouse).